The chain runs to 447 residues: Putative FBD-associated F-box protein At1g61330 (447 aa).

Positions 10–57 (KLIKRLSDELVECILSFLPVQSTLQHRVLSKRYRDTWKLSRDLDFSGI) constitute an F-box domain. An FBD domain is found at 384–416 (VKIIGYKGHWHELDIVEFFVKNAPSLKRLELQM).

The chain is Putative FBD-associated F-box protein At1g61330 from Arabidopsis thaliana (Mouse-ear cress).